Here is a 242-residue protein sequence, read N- to C-terminus: Uridylate kinase (242 aa).

ATP is bound at residue 11-14 (KLSG). The segment at 19–24 (GDKGVG) is involved in allosteric activation by GTP. UMP is bound at residue Gly53. Gly54 and Arg58 together coordinate ATP. UMP is bound by residues Asp73 and 134–141 (IGSPYFST). Residues Asn162, Tyr168, and Asp171 each coordinate ATP.

The protein belongs to the UMP kinase family. Homohexamer.

It localises to the cytoplasm. The enzyme catalyses UMP + ATP = UDP + ADP. It participates in pyrimidine metabolism; CTP biosynthesis via de novo pathway; UDP from UMP (UMPK route): step 1/1. Its activity is regulated as follows. Allosterically activated by GTP. Inhibited by UTP. Its function is as follows. Catalyzes the reversible phosphorylation of UMP to UDP. This Streptococcus agalactiae serotype Ia (strain ATCC 27591 / A909 / CDC SS700) protein is Uridylate kinase.